A 223-amino-acid chain; its full sequence is UPF0441 protein YgiB (223 aa).

Residues 178–195 are compositionally biased toward low complexity; sequence TVPKTAMAPKPATTTTVT. The interval 178–223 is disordered; it reads TVPKTAMAPKPATTTTVTRGGFGESVAKQSTLQRSATGTSSRSMGG. Polar residues predominate over residues 204-223; it reads AKQSTLQRSATGTSSRSMGG.

This sequence belongs to the UPF0441 family.

The protein is UPF0441 protein YgiB of Escherichia coli (strain ATCC 8739 / DSM 1576 / NBRC 3972 / NCIMB 8545 / WDCM 00012 / Crooks).